Here is a 429-residue protein sequence, read N- to C-terminus: Serine--tRNA ligase (429 aa).

229–231 (TAE) is an L-serine binding site. ATP is bound at residue 260–262 (RSE). L-serine is bound at residue glutamate 283. Residue 347–350 (EISS) participates in ATP binding. Serine 383 is an L-serine binding site.

Belongs to the class-II aminoacyl-tRNA synthetase family. Type-1 seryl-tRNA synthetase subfamily. Homodimer. The tRNA molecule binds across the dimer.

Its subcellular location is the cytoplasm. The enzyme catalyses tRNA(Ser) + L-serine + ATP = L-seryl-tRNA(Ser) + AMP + diphosphate + H(+). It carries out the reaction tRNA(Sec) + L-serine + ATP = L-seryl-tRNA(Sec) + AMP + diphosphate + H(+). It participates in aminoacyl-tRNA biosynthesis; selenocysteinyl-tRNA(Sec) biosynthesis; L-seryl-tRNA(Sec) from L-serine and tRNA(Sec): step 1/1. Its function is as follows. Catalyzes the attachment of serine to tRNA(Ser). Is also able to aminoacylate tRNA(Sec) with serine, to form the misacylated tRNA L-seryl-tRNA(Sec), which will be further converted into selenocysteinyl-tRNA(Sec). In Orientia tsutsugamushi (strain Ikeda) (Rickettsia tsutsugamushi), this protein is Serine--tRNA ligase.